The following is a 190-amino-acid chain: Transcription antitermination protein NusB (190 aa).

Positions alanine 158–arginine 190 are disordered.

This sequence belongs to the NusB family.

In terms of biological role, involved in transcription antitermination. Required for transcription of ribosomal RNA (rRNA) genes. Binds specifically to the boxA antiterminator sequence of the ribosomal RNA (rrn) operons. This Mycobacterium leprae (strain TN) protein is Transcription antitermination protein NusB.